We begin with the raw amino-acid sequence, 621 residues long: DNA mismatch repair protein MutL (621 aa).

It belongs to the DNA mismatch repair MutL/HexB family.

In terms of biological role, this protein is involved in the repair of mismatches in DNA. It is required for dam-dependent methyl-directed DNA mismatch repair. May act as a 'molecular matchmaker', a protein that promotes the formation of a stable complex between two or more DNA-binding proteins in an ATP-dependent manner without itself being part of a final effector complex. The protein is DNA mismatch repair protein MutL of Xylella fastidiosa (strain M12).